A 756-amino-acid polypeptide reads, in one-letter code: Rab11 family-interacting protein 3 (756 aa).

Residues 1–24 show a composition bias toward pro residues; the sequence is MASAPPASPPGSEPPGPDPEPGGP. The interval 1–204 is disordered; it reads MASAPPASPP…SEPVGSQEDG (204 aa). The tract at residues 2–435 is important for binding to DYNC1LI1; the sequence is ASAPPASPPG…RLSSKKVARY (434 aa). Residues 27–39 show a composition bias toward low complexity; that stretch reads PGAAQLAPGPAEL. Residue Ser52 is modified to Phosphoserine. Positions 53 to 68 are enriched in low complexity; it reads PGLDEPAPGAAADGGA. Positions 84–94 are enriched in pro residues; sequence DPGPSAPPPRS. Residue Ser102 is modified to Phosphoserine; by CDK1. EF-hand domains lie at 202 to 237 and 234 to 269; these read EDGP…YGAE and YGAE…IRNG. Asp215, Asp217, Asp219, Asp226, Asp247, Ser249, and Asp258 together coordinate Ca(2+). A phosphoserine mark is found at Ser281, Ser348, Ser488, Ser538, Ser647, and Ser648. The ARF-binding domain (ABD) stretch occupies residues 484–588; sequence GEQHSRLRQE…LLDEIESLTL (105 aa). Residues 485–694 are a coiled coil; that stretch reads EQHSRLRQEN…NGQIITLSIQ (210 aa). A disordered region spans residues 645–664; it reads RSSSMGLQEYHSRARESELE. A compositionally biased stretch (basic and acidic residues) spans 654-664; sequence YHSRARESELE. One can recognise an FIP-RBD domain in the interval 694–756; sequence QGAKSLFSTA…ETNPSILEVK (63 aa).

Homodimer. Interacts with RAB11A; the interaction is direct and is required for the recruitment to endosomes. Interacts with RAB11B. Forms a ternary complex with RAB11A and dynein intermediate chain DYNC1LI1; RAB11FIP3 links RAB11A to dynein and the interaction regulates endocytic trafficking. Interacts with dynein intermediate chain and dynactin (DCTN1); the interaction activates dynein processivity. Interacts with ARF6 and EXOC7; the interaction serves for recruitment and tethering of recycling endosomes-derived vesicles to the cleavage furrow/midbody. Interacts with RACGAP1/MgcRacGAP; the interaction occurs at late telophase and is required for recruitment and tethering of recycling endosomes-derived vesicles to the cleavage furrow/midbody. Forms a complex with RAB11A and Rabin8/RAB3IP, probably a heterohexamer with two of each protein subunit, where RAB3IP and RAB11FIP3 simultaneously bind to RAB11A; the complex promotes preciliary trafficking. Forms a complex containing RAB11A, ASAP1, RAB3IP, RAP11FIP3 and ARF4; the complex promotes preciliary trafficking; the complex binds to RHO in photoreceptor cells and promotes RHO ciliary transport. Interacts with RAB11FIP4. Interacts with RAB25. Phosphorylated at Ser-102 by CDK1 during metaphase, and dephosphorylated as cells enter telophase.

The protein resides in the endosome membrane. Its subcellular location is the recycling endosome membrane. It localises to the cytoplasm. The protein localises to the cytoskeleton. It is found in the microtubule organizing center. The protein resides in the centrosome. Its subcellular location is the cleavage furrow. It localises to the midbody. The protein localises to the golgi apparatus membrane. It is found in the golgi apparatus. The protein resides in the trans-Golgi network membrane. Its function is as follows. Downstream effector molecule for Rab11 GTPase which is involved in endocytic trafficking, cytokinesis and intracellular ciliogenesis by participating in membrane delivery. Recruited by Rab11 to endosomes where it links Rab11 to dynein motor complex. The functional Rab11-RAB11FIP3-dynein complex regulates the movement of peripheral sorting endosomes (SE) along microtubule tracks toward the microtubule organizing center/centrosome, generating the endocytic recycling compartment (ERC) during interphase of cell cycle. Facilitates the interaction between dynein and dynactin and activates dynein processivity. Binding with ASAP1 is needed to regulate the pericentrosomal localization of recycling endosomes. The Rab11-RAB11FIP3 complex is also implicated in the transport during telophase of vesicles derived from recycling endosomes to the cleavage furrow via centrosome-anchored microtubules, where the vesicles function to deliver membrane during late cytokinesis and abscission. The recruitment of Rab11-RAB11FIP3-containing endosomes to the cleavage furrow and tethering to the midbody is co-mediated by RAB11FIP3 interaction with ARF6-exocyst and RACGAP1-MKLP1 tethering complexes. Also involved in the Rab11-Rabin8-Rab8 ciliogenesis cascade by facilitating the orderly assembly of a ciliary targeting complex containing Rab11, ASAP1, Rabin8/RAB3IP, RAB11FIP3 and ARF4, which directs preciliary vesicle trafficking to mother centriole and ciliogenesis initiation. Also promotes the activity of Rab11 and ASAP1 in the ARF4-dependent Golgi-to-cilia transport of the sensory receptor rhodopsin. Competes with WDR44 for binding to Rab11, which controls intracellular ciliogenesis pathway. May play a role in breast cancer cell motility by regulating actin cytoskeleton. The chain is Rab11 family-interacting protein 3 from Homo sapiens (Human).